Consider the following 471-residue polypeptide: 3-isopropylmalate dehydratase large subunit (471 aa).

Residues C347, C407, and C410 each contribute to the [4Fe-4S] cluster site.

This sequence belongs to the aconitase/IPM isomerase family. LeuC type 1 subfamily. As to quaternary structure, heterodimer of LeuC and LeuD. Requires [4Fe-4S] cluster as cofactor.

It carries out the reaction (2R,3S)-3-isopropylmalate = (2S)-2-isopropylmalate. Its pathway is amino-acid biosynthesis; L-leucine biosynthesis; L-leucine from 3-methyl-2-oxobutanoate: step 2/4. In terms of biological role, catalyzes the isomerization between 2-isopropylmalate and 3-isopropylmalate, via the formation of 2-isopropylmaleate. This is 3-isopropylmalate dehydratase large subunit from Anoxybacillus flavithermus (strain DSM 21510 / WK1).